Reading from the N-terminus, the 1057-residue chain is Carbamoyl phosphate synthase large chain (1057 aa).

A carboxyphosphate synthetic domain region spans residues 1 to 401; sequence MPKRNDIKTI…SLLKAIRSLE (401 aa). Arg129, Arg169, Gly175, Gly176, Lys208, Ile210, Glu215, Gly241, Ile242, His243, Gln284, and Glu298 together coordinate ATP. One can recognise an ATP-grasp 1 domain in the interval 133-327; it reads RTLMNDLNVP…IAKLAAKIAV (195 aa). Mg(2+)-binding residues include Gln284, Glu298, and Asn300. Residues Gln284, Glu298, and Asn300 each contribute to the Mn(2+) site. Positions 402-546 are oligomerization domain; that stretch reads YGVHHLGLPN…YGTYETENES (145 aa). The carbamoyl phosphate synthetic domain stretch occupies residues 547–929; it reads IVTDKEKILV…ALFKGLTGSG (383 aa). The ATP-grasp 2 domain maps to 671–861; it reads EALLRKINVP…MAQLAMRAII (191 aa). Residues Arg707, Arg746, Leu748, Glu752, Gly777, Val778, His779, Ser780, Gln820, and Glu832 each coordinate ATP. Mg(2+) contacts are provided by Gln820, Glu832, and Asn834. Mn(2+)-binding residues include Gln820, Glu832, and Asn834. The 128-residue stretch at 930-1057 folds into the MGS-like domain; it reads VEVKDHGTVL…ESMTFTMRQM (128 aa). The tract at residues 930–1057 is allosteric domain; that stretch reads VEVKDHGTVL…ESMTFTMRQM (128 aa).

This sequence belongs to the CarB family. As to quaternary structure, composed of two chains; the small (or glutamine) chain promotes the hydrolysis of glutamine to ammonia, which is used by the large (or ammonia) chain to synthesize carbamoyl phosphate. Tetramer of heterodimers (alpha,beta)4. Mg(2+) serves as cofactor. It depends on Mn(2+) as a cofactor.

The catalysed reaction is hydrogencarbonate + L-glutamine + 2 ATP + H2O = carbamoyl phosphate + L-glutamate + 2 ADP + phosphate + 2 H(+). The enzyme catalyses hydrogencarbonate + NH4(+) + 2 ATP = carbamoyl phosphate + 2 ADP + phosphate + 2 H(+). Its pathway is amino-acid biosynthesis; L-arginine biosynthesis; carbamoyl phosphate from bicarbonate: step 1/1. The protein operates within pyrimidine metabolism; UMP biosynthesis via de novo pathway; (S)-dihydroorotate from bicarbonate: step 1/3. In terms of biological role, large subunit of the glutamine-dependent carbamoyl phosphate synthetase (CPSase). CPSase catalyzes the formation of carbamoyl phosphate from the ammonia moiety of glutamine, carbonate, and phosphate donated by ATP, constituting the first step of 2 biosynthetic pathways, one leading to arginine and/or urea and the other to pyrimidine nucleotides. The large subunit (synthetase) binds the substrates ammonia (free or transferred from glutamine from the small subunit), hydrogencarbonate and ATP and carries out an ATP-coupled ligase reaction, activating hydrogencarbonate by forming carboxy phosphate which reacts with ammonia to form carbamoyl phosphate. The chain is Carbamoyl phosphate synthase large chain from Staphylococcus aureus (strain MRSA252).